The sequence spans 493 residues: Protein kinase PINOID 2 (493 aa).

The tract at residues methionine 1 to lysine 53 is disordered. The span at isoleucine 27–aspartate 44 shows a compositional bias: low complexity. The region spanning phenylalanine 80–phenylalanine 443 is the Protein kinase domain. ATP contacts are provided by residues leucine 86 to valine 94 and lysine 120. Catalysis depends on aspartate 216, which acts as the Proton acceptor. Positions glycine 295–glycine 306 are enriched in gly residues. Disordered stretches follow at residues glycine 295–proline 320 and glutamate 458–phenylalanine 493. Over residues aspartate 307–glutamate 319 the composition is skewed to acidic residues. Positions lysine 444–phenylalanine 493 constitute an AGC-kinase C-terminal domain. Residues serine 474 to phenylalanine 493 are compositionally biased toward basic and acidic residues.

The protein belongs to the protein kinase superfamily. Ser/Thr protein kinase family.

The enzyme catalyses L-seryl-[protein] + ATP = O-phospho-L-seryl-[protein] + ADP + H(+). It catalyses the reaction L-threonyl-[protein] + ATP = O-phospho-L-threonyl-[protein] + ADP + H(+). In terms of biological role, serine/threonine-protein kinase involved in the regulation of auxin signaling. This Oryza sativa subsp. japonica (Rice) protein is Protein kinase PINOID 2 (PID2).